A 347-amino-acid polypeptide reads, in one-letter code: Single-pass membrane and coiled-coil domain-containing protein 2 (347 aa).

Residues 1–89 (MMSLQLGTAG…PPSKPDEQEV (89 aa)) are disordered. Basic and acidic residues-rich tracts occupy residues 10 to 21 (GKERQLAEKSRD), 36 to 51 (EMDH…DKPS), and 60 to 86 (YKMD…KPDE). Positions 139-238 (DWLERINNII…MNVLNSKLEM (100 aa)) form a coiled coil. A Phosphoserine modification is found at Ser178. The segment at 243-274 (GSDADSHNSEDVDTEQEEPLVPEASPSLSASP) is disordered. Positions 253 to 262 (DVDTEQEEPL) are enriched in acidic residues. The span at 263–273 (VPEASPSLSAS) shows a compositional bias: low complexity. A helical membrane pass occupies residues 288–308 (LFVIVYVVTITGLSCYILFVD).

The protein localises to the membrane. The protein is Single-pass membrane and coiled-coil domain-containing protein 2 (Smco2) of Mus musculus (Mouse).